A 460-amino-acid polypeptide reads, in one-letter code: MTQPVTPTIFTVSRLNQTVRQLLELEMGQIWLSAEISNLSQPASGHWYFTLKDDKAQVRCAMFRNSNRRVTFRPQNGQQVLVRASITLYESRGDYQLIAESMQPAGDGLLQQQFEALKQRLQAEGLFDVGHKQPLPSPARCVGVITSTSGAALHDVLHVLRRRDPALPVVIYPSAVQGGEAPGQLVRAIALANLRAECDVLIVGRGGGSLEDLWSFNDERVARAIFASHIPIVSAVGHETDVSIADFVADLRAPTPSAAAEVVSRNRDELLRRLLSQRQRLDMALDYTLARRRQRLQQLRHRLEQQHPQLRLARQQARLLSLHRRLEEAIDTQLRLAERRWRLGGERLQQRSPAHALRQQQYHLQQLSHRLESQLQRSVAARRERFGALCSRLEGMSPLATLARGFSVTQRDDGQLLRHREQVAPGDTLRTRLEDGWVESQVTATRPLTARRPRGTKGSA.

The protein belongs to the XseA family. In terms of assembly, heterooligomer composed of large and small subunits.

The protein resides in the cytoplasm. The enzyme catalyses Exonucleolytic cleavage in either 5'- to 3'- or 3'- to 5'-direction to yield nucleoside 5'-phosphates.. Bidirectionally degrades single-stranded DNA into large acid-insoluble oligonucleotides, which are then degraded further into small acid-soluble oligonucleotides. The polypeptide is Exodeoxyribonuclease 7 large subunit (Edwardsiella ictaluri (strain 93-146)).